The following is a 184-amino-acid chain: Lipocalin-15 (184 aa).

Positions 1–20 are cleaved as a signal peptide; sequence MMSFLLGAILTLLWAPTAQA. Cysteines 83 and 176 form a disulfide.

The protein belongs to the calycin superfamily. Lipocalin family.

The protein resides in the secreted. This Homo sapiens (Human) protein is Lipocalin-15 (LCN15).